We begin with the raw amino-acid sequence, 1385 residues long: DNA-directed RNA polymerase subunit beta'' (1385 aa).

Cys224, Cys294, Cys301, and Cys304 together coordinate Zn(2+).

The protein belongs to the RNA polymerase beta' chain family. RpoC2 subfamily. As to quaternary structure, in plastids the minimal PEP RNA polymerase catalytic core is composed of four subunits: alpha, beta, beta', and beta''. When a (nuclear-encoded) sigma factor is associated with the core the holoenzyme is formed, which can initiate transcription. Zn(2+) serves as cofactor.

The protein localises to the plastid. Its subcellular location is the chloroplast. The catalysed reaction is RNA(n) + a ribonucleoside 5'-triphosphate = RNA(n+1) + diphosphate. Functionally, DNA-dependent RNA polymerase catalyzes the transcription of DNA into RNA using the four ribonucleoside triphosphates as substrates. The sequence is that of DNA-directed RNA polymerase subunit beta'' from Illicium oligandrum (Star anise).